The chain runs to 166 residues: Large ribosomal subunit protein uL10 (166 aa).

The protein belongs to the universal ribosomal protein uL10 family. In terms of assembly, part of the ribosomal stalk of the 50S ribosomal subunit. The N-terminus interacts with L11 and the large rRNA to form the base of the stalk. The C-terminus forms an elongated spine to which L12 dimers bind in a sequential fashion forming a multimeric L10(L12)X complex.

Its function is as follows. Forms part of the ribosomal stalk, playing a central role in the interaction of the ribosome with GTP-bound translation factors. The protein is Large ribosomal subunit protein uL10 of Streptococcus pneumoniae serotype 19F (strain G54).